A 150-amino-acid chain; its full sequence is D-aminoacyl-tRNA deacylase (150 aa).

Positions glycine 138 to proline 139 match the Gly-cisPro motif, important for rejection of L-amino acids motif.

Belongs to the DTD family. As to quaternary structure, homodimer.

The protein localises to the cytoplasm. It carries out the reaction glycyl-tRNA(Ala) + H2O = tRNA(Ala) + glycine + H(+). The enzyme catalyses a D-aminoacyl-tRNA + H2O = a tRNA + a D-alpha-amino acid + H(+). In terms of biological role, an aminoacyl-tRNA editing enzyme that deacylates mischarged D-aminoacyl-tRNAs. Also deacylates mischarged glycyl-tRNA(Ala), protecting cells against glycine mischarging by AlaRS. Acts via tRNA-based rather than protein-based catalysis; rejects L-amino acids rather than detecting D-amino acids in the active site. By recycling D-aminoacyl-tRNA to D-amino acids and free tRNA molecules, this enzyme counteracts the toxicity associated with the formation of D-aminoacyl-tRNA entities in vivo and helps enforce protein L-homochirality. In Dechloromonas aromatica (strain RCB), this protein is D-aminoacyl-tRNA deacylase.